The primary structure comprises 432 residues: Ornithine aminotransferase, mitochondrial (432 aa).

N6-(pyridoxal phosphate)lysine is present on K287.

Belongs to the class-III pyridoxal-phosphate-dependent aminotransferase family. Homotetramer. The cofactor is pyridoxal 5'-phosphate.

It localises to the mitochondrion matrix. The catalysed reaction is a 2-oxocarboxylate + L-ornithine = L-glutamate 5-semialdehyde + an L-alpha-amino acid. It participates in amino-acid biosynthesis; L-proline biosynthesis; L-glutamate 5-semialdehyde from L-ornithine: step 1/1. The protein is Ornithine aminotransferase, mitochondrial (Oat) of Drosophila ananassae (Fruit fly).